A 169-amino-acid chain; its full sequence is MYTSKQPFLKSKQPFRKSKQTFNKSKQTFRKSKQTFRKFKQPFRKSKQPFRRRPRIGPGDRIDYRNMSLINRFISEQGKILSRRINRLTLKQQRLITLAIKQARILSFLPFRNYENEKQFQAQSISIITGSRPRKNRHIPQLTEKYNSNRNLRNYNQNLRNINRNLSSD.

The disordered stretch occupies residues 1 to 61; the sequence is MYTSKQPFLK…RRPRIGPGDR (61 aa). Residues 27-55 are compositionally biased toward basic residues; that stretch reads QTFRKSKQTFRKFKQPFRKSKQPFRRRPR.

Belongs to the bacterial ribosomal protein bS18 family. In terms of assembly, part of the 30S ribosomal subunit.

It is found in the plastid. It localises to the chloroplast. In Agrostis stolonifera (Creeping bentgrass), this protein is Small ribosomal subunit protein bS18c.